The following is a 327-amino-acid chain: Phenylalanine--tRNA ligase alpha subunit (327 aa).

Glutamate 252 is a Mg(2+) binding site.

It belongs to the class-II aminoacyl-tRNA synthetase family. Phe-tRNA synthetase alpha subunit type 1 subfamily. As to quaternary structure, tetramer of two alpha and two beta subunits. The cofactor is Mg(2+).

It is found in the cytoplasm. It carries out the reaction tRNA(Phe) + L-phenylalanine + ATP = L-phenylalanyl-tRNA(Phe) + AMP + diphosphate + H(+). This chain is Phenylalanine--tRNA ligase alpha subunit, found in Vibrio cholerae serotype O1 (strain ATCC 39541 / Classical Ogawa 395 / O395).